The primary structure comprises 238 residues: Ribonuclease 3 (238 aa).

The 126-residue stretch at 11–136 folds into the RNase III domain; that stretch reads RARLEAAIGY…LIAAIYLDGG (126 aa). Position 49 (Glu49) interacts with Mg(2+). Residue Asp53 is part of the active site. The Mg(2+) site is built by Asp122 and Glu125. Residue Glu125 is part of the active site. The region spanning 161 to 230 is the DRBM domain; sequence DAKTELQEWA…AMKLLEREGV (70 aa). A compositionally biased stretch (basic and acidic residues) spans 180–193; that stretch reads YRTEDRSGPDHDPR. Residues 180 to 215 form a disordered region; the sequence is YRTEDRSGPDHDPRFTVTVEVDGIDPETGVDRSKRG.

It belongs to the ribonuclease III family. As to quaternary structure, homodimer. Mg(2+) is required as a cofactor.

It localises to the cytoplasm. It carries out the reaction Endonucleolytic cleavage to 5'-phosphomonoester.. Digests double-stranded RNA. Involved in the processing of primary rRNA transcript to yield the immediate precursors to the large and small rRNAs (23S and 16S). Processes some mRNAs, and tRNAs when they are encoded in the rRNA operon. Processes pre-crRNA and tracrRNA of type II CRISPR loci if present in the organism. This is Ribonuclease 3 from Sinorhizobium medicae (strain WSM419) (Ensifer medicae).